The sequence spans 204 residues: Putative 3-methyladenine DNA glycosylase (204 aa).

This sequence belongs to the DNA glycosylase MPG family.

This chain is Putative 3-methyladenine DNA glycosylase, found in Bacillus mycoides (strain KBAB4) (Bacillus weihenstephanensis).